Consider the following 1312-residue polypeptide: Probable histone-lysine N-methyltransferase lin-59 (1312 aa).

Polar residues-rich tracts occupy residues 1–11 (MHGAGEQQQRY) and 25–36 (STSSHQYQQQGA). Disordered stretches follow at residues 1 to 41 (MHGA…QMHQ), 54 to 81 (TTTS…RQQG), 154 to 223 (QPSG…KPVD), 312 to 435 (EESK…PPPV), and 524 to 556 (KDNI…EPSE). Residues 54-68 (TTTSAAASTSSSGGS) are compositionally biased toward low complexity. The segment covering 69–78 (NSSGGSGGHR) has biased composition (gly residues). The span at 160–176 (PMSSNAPATTSSATPDS) shows a compositional bias: low complexity. Acidic residues predominate over residues 200-210 (DHDDEEDDDGP). Residues 312 to 321 (EESKKKKDME) are compositionally biased toward basic and acidic residues. Positions 344-367 (ATRSTNSPDVTTSNLPEEPSTSTM) are enriched in polar residues. A compositionally biased stretch (basic and acidic residues) spans 371–382 (KENEDVEKVEGK). The span at 383 to 394 (RRGRKPKKRRGF) shows a compositional bias: basic residues. Composition is skewed to basic and acidic residues over residues 395 to 419 (HKES…DHLP) and 524 to 535 (KDNIKKEVKEES). One can recognise an AWS domain in the interval 590–635 (APSLTCGCTKGACTSDMDCLNRALRVQCSSDCSVPYCSNRRFWKED). An SET domain is found at 638-750 (NKLCVSNGPR…PNAEITVDKS (113 aa)). Residues 913-934 (DNAPRARALSTSCPSPVPSKRG) form a disordered region. Residues 967–1027 (AVRCICGALD…EYICDFCTNK (61 aa)) form a PHD-type zinc finger. One can recognise a BAH domain in the interval 1100 to 1223 (NKYRFPKAAT…KTQRVFEKVP (124 aa)). The tract at residues 1248 to 1295 (RDFRPYDPSNPSPKPPKTSSIPSTSSIDPPQSSSDGLPEVDTKKLSKR) is disordered. The span at 1264–1281 (KTSSIPSTSSIDPPQSSS) shows a compositional bias: low complexity.

This sequence belongs to the class V-like SAM-binding methyltransferase superfamily. Histone-lysine methyltransferase family. SET2 subfamily. In terms of tissue distribution, widely expressed throughout embryonic development and into adulthood.

Its subcellular location is the nucleus. The enzyme catalyses L-lysyl-[histone] + S-adenosyl-L-methionine = N(6)-methyl-L-lysyl-[histone] + S-adenosyl-L-homocysteine + H(+). In terms of biological role, probable histone methyltransferase. Essential protein required to maintain expression of homeotic genes egl-5 and mab-5. May play an analogous role to the trithorax Group (trxG) proteins. TrxG proteins form multiprotein complexes that are required to maintain the transcriptionally active state of homeotic genes throughout development. May act via a modification of chromatin. The sequence is that of Probable histone-lysine N-methyltransferase lin-59 (lin-59) from Caenorhabditis elegans.